The primary structure comprises 291 residues: Phosphatidylglycerol--prolipoprotein diacylglyceryl transferase (291 aa).

The next 7 membrane-spanning stretches (helical) occupy residues Val-21–Ala-41, Leu-60–Tyr-80, Trp-96–Phe-116, Phe-130–Gly-150, Ser-198–Ile-218, Gly-225–Phe-245, and Ile-260–Trp-280. Arg-143 lines the a 1,2-diacyl-sn-glycero-3-phospho-(1'-sn-glycerol) pocket.

The protein belongs to the Lgt family.

The protein localises to the cell inner membrane. The enzyme catalyses L-cysteinyl-[prolipoprotein] + a 1,2-diacyl-sn-glycero-3-phospho-(1'-sn-glycerol) = an S-1,2-diacyl-sn-glyceryl-L-cysteinyl-[prolipoprotein] + sn-glycerol 1-phosphate + H(+). It functions in the pathway protein modification; lipoprotein biosynthesis (diacylglyceryl transfer). Its function is as follows. Catalyzes the transfer of the diacylglyceryl group from phosphatidylglycerol to the sulfhydryl group of the N-terminal cysteine of a prolipoprotein, the first step in the formation of mature lipoproteins. The sequence is that of Phosphatidylglycerol--prolipoprotein diacylglyceryl transferase from Klebsiella pneumoniae (strain 342).